The sequence spans 476 residues: Aspartyl/glutamyl-tRNA(Asn/Gln) amidotransferase subunit B (476 aa).

It belongs to the GatB/GatE family. GatB subfamily. In terms of assembly, heterotrimer of A, B and C subunits.

The catalysed reaction is L-glutamyl-tRNA(Gln) + L-glutamine + ATP + H2O = L-glutaminyl-tRNA(Gln) + L-glutamate + ADP + phosphate + H(+). It carries out the reaction L-aspartyl-tRNA(Asn) + L-glutamine + ATP + H2O = L-asparaginyl-tRNA(Asn) + L-glutamate + ADP + phosphate + 2 H(+). Its function is as follows. Allows the formation of correctly charged Asn-tRNA(Asn) or Gln-tRNA(Gln) through the transamidation of misacylated Asp-tRNA(Asn) or Glu-tRNA(Gln) in organisms which lack either or both of asparaginyl-tRNA or glutaminyl-tRNA synthetases. The reaction takes place in the presence of glutamine and ATP through an activated phospho-Asp-tRNA(Asn) or phospho-Glu-tRNA(Gln). The polypeptide is Aspartyl/glutamyl-tRNA(Asn/Gln) amidotransferase subunit B (Thermosipho melanesiensis (strain DSM 12029 / CIP 104789 / BI429)).